The sequence spans 337 residues: DNA-directed RNA polymerase subunit alpha (337 aa).

Residues 1 to 233 (MIQKNWQELI…DQLSIFVNFE (233 aa)) form an alpha N-terminal domain (alpha-NTD) region. Positions 249–337 (FNPVLLKKVD…DLAKRYEDQY (89 aa)) are alpha C-terminal domain (alpha-CTD).

Belongs to the RNA polymerase alpha chain family. In terms of assembly, homodimer. The RNAP catalytic core consists of 2 alpha, 1 beta, 1 beta' and 1 omega subunit. When a sigma factor is associated with the core the holoenzyme is formed, which can initiate transcription.

It carries out the reaction RNA(n) + a ribonucleoside 5'-triphosphate = RNA(n+1) + diphosphate. In terms of biological role, DNA-dependent RNA polymerase catalyzes the transcription of DNA into RNA using the four ribonucleoside triphosphates as substrates. The chain is DNA-directed RNA polymerase subunit alpha from Brucella canis (strain ATCC 23365 / NCTC 10854 / RM-666).